A 355-amino-acid chain; its full sequence is Cytoplasmic tRNA 2-thiolation protein 1 (355 aa).

A disordered region spans residues 320–341 (GIGRPRGVNGDHNKETKKPGSV). Basic and acidic residues predominate over residues 328 to 337 (NGDHNKETKK).

It belongs to the TtcA family. CTU1/NCS6/ATPBD3 subfamily.

It is found in the cytoplasm. It participates in tRNA modification; 5-methoxycarbonylmethyl-2-thiouridine-tRNA biosynthesis. In terms of biological role, plays a central role in 2-thiolation of mcm(5)S(2)U at tRNA wobble positions of tRNA(Lys), tRNA(Glu) and tRNA(Gln). Directly binds tRNAs and probably acts by catalyzing adenylation of tRNAs, an intermediate required for 2-thiolation. It is unclear whether it acts as a sulfurtransferase that transfers sulfur from thiocarboxylated URM1 onto the uridine of tRNAs at wobble position. This Arabidopsis thaliana (Mouse-ear cress) protein is Cytoplasmic tRNA 2-thiolation protein 1.